We begin with the raw amino-acid sequence, 202 residues long: Alcohol dehydrogenase-related 31 kDa protein (202 aa).

11–34 (YVADCGGIALETSKVLMTKNIAKL) contributes to the NAD(+) binding site. Ser139 is a substrate binding site. The active-site Proton acceptor is the Tyr152.

It belongs to the short-chain dehydrogenases/reductases (SDR) family.

This chain is Alcohol dehydrogenase-related 31 kDa protein (Adhr), found in Drosophila erecta (Fruit fly).